Here is a 368-residue protein sequence, read N- to C-terminus: Putative agmatine deiminase (368 aa).

The active-site Amidino-cysteine intermediate is C359.

It belongs to the agmatine deiminase family.

It catalyses the reaction agmatine + H2O = N-carbamoylputrescine + NH4(+). This Pectobacterium atrosepticum (strain SCRI 1043 / ATCC BAA-672) (Erwinia carotovora subsp. atroseptica) protein is Putative agmatine deiminase.